A 582-amino-acid polypeptide reads, in one-letter code: MSEALETGDPSPPPPIVSENGKTYYYLNSQESQAPNTPSPQEVPPKKMTNLFESGPLVYEDVAADIEAVTERASRRHYENKMVVKNSREMFDNVNILPDGRYYCCLCNRPYKTHATLTAHLRGYHLRNESSCDEPGCNFLSFTDQEKKRHRRTHDKKKKERNSQESMVIHEKIQKAVRRLDYPGEDELRDHLNGSTEVQGTIRTMTKKGKIRYACLKCPHSVFNAYHAARHVEMHNDFPKNCFYCGEIRKGTVDLQVHYMRVHKHEGIRTFKCSVCHLRFTTTILFRDHVECENGCQNPEIRQDIYYGELPEGTIVDDLTQDRLQNFRKRQEIWKTMGQMVEEHRTDVHEEIVGESSVQAGDTTVFDGSRAFIQTPFGLKTALEVKNTSRFCPRSGKRTSDDDLMITNKKRERLEMAPNLHFHQDIIHRLPTSTTTQRQNNAFQNEYLRPPVSYGYDPLIGRYPDFQLMSQSSLPSSSASSSSYDPFATAVYQDSDRNPMQPNDQHICDMNNVGAYETANFGLDNSSDLVVNEATIASNLMVNEVEDEVFEELNKLDFVMPADDGNDNDDDLEEVFNFGNVA.

Positions 1 to 21 are disordered; it reads MSEALETGDPSPPPPIVSENG. C2H2-type zinc fingers lie at residues 102-125, 130-154, and 213-235; these read YYCCLCNRPYKTHATLTAHLRGYH, SSCDEPGCNFLSFTDQEKKRHRRTH, and YACLKCPHSVFNAYHAARHVEMH.

The protein localises to the nucleus. The polypeptide is Heterogeneous nuclear ribonucleoprotein C homolog (Caenorhabditis elegans).